Consider the following 184-residue polypeptide: Acireductone dioxygenase 4 (184 aa).

Fe(2+)-binding residues include H86, H88, E92, and H131. Residues H86, H88, E92, and H131 each coordinate Ni(2+).

The protein belongs to the acireductone dioxygenase (ARD) family. The cofactor is Fe(2+). It depends on Ni(2+) as a cofactor.

It localises to the cytoplasm. It is found in the nucleus. It catalyses the reaction 1,2-dihydroxy-5-(methylsulfanyl)pent-1-en-3-one + O2 = 4-methylsulfanyl-2-oxobutanoate + formate + 2 H(+). It carries out the reaction 1,2-dihydroxy-5-(methylsulfanyl)pent-1-en-3-one + O2 = 3-(methylsulfanyl)propanoate + CO + formate + 2 H(+). The protein operates within amino-acid biosynthesis; L-methionine biosynthesis via salvage pathway; L-methionine from S-methyl-5-thio-alpha-D-ribose 1-phosphate: step 5/6. Catalyzes 2 different reactions between oxygen and the acireductone 1,2-dihydroxy-3-keto-5-methylthiopentene (DHK-MTPene) depending upon the metal bound in the active site. Fe-containing acireductone dioxygenase (Fe-ARD) produces formate and 2-keto-4-methylthiobutyrate (KMTB), the alpha-ketoacid precursor of methionine in the methionine recycle pathway. Ni-containing acireductone dioxygenase (Ni-ARD) produces methylthiopropionate, carbon monoxide and formate, and does not lie on the methionine recycle pathway. In Oryza sativa subsp. japonica (Rice), this protein is Acireductone dioxygenase 4 (ARD4).